The primary structure comprises 352 residues: tRNA-specific 2-thiouridylase MnmA (352 aa).

Residues Gly-7–Ser-14 and Leu-33 each bind ATP. Cys-94 functions as the Nucleophile in the catalytic mechanism. A disulfide bridge connects residues Cys-94 and Cys-193. Position 119 (Gly-119) interacts with ATP. The interval Lys-143 to Gln-145 is interaction with tRNA. Cys-193 functions as the Cysteine persulfide intermediate in the catalytic mechanism. The interval Arg-298–Tyr-299 is interaction with tRNA.

It belongs to the MnmA/TRMU family.

The protein resides in the cytoplasm. It carries out the reaction S-sulfanyl-L-cysteinyl-[protein] + uridine(34) in tRNA + AH2 + ATP = 2-thiouridine(34) in tRNA + L-cysteinyl-[protein] + A + AMP + diphosphate + H(+). Functionally, catalyzes the 2-thiolation of uridine at the wobble position (U34) of tRNA, leading to the formation of s(2)U34. The sequence is that of tRNA-specific 2-thiouridylase MnmA from Trichormus variabilis (strain ATCC 29413 / PCC 7937) (Anabaena variabilis).